A 356-amino-acid polypeptide reads, in one-letter code: tRNA N6-adenosine threonylcarbamoyltransferase (356 aa).

2 residues coordinate Fe cation: His116 and His120. Substrate contacts are provided by residues 139-143 (IVSGG), Asp174, Gly187, Asp191, and Asn281. Asp309 contacts Fe cation.

Belongs to the KAE1 / TsaD family. Fe(2+) serves as cofactor.

The protein localises to the cytoplasm. The catalysed reaction is L-threonylcarbamoyladenylate + adenosine(37) in tRNA = N(6)-L-threonylcarbamoyladenosine(37) in tRNA + AMP + H(+). In terms of biological role, required for the formation of a threonylcarbamoyl group on adenosine at position 37 (t(6)A37) in tRNAs that read codons beginning with adenine. Is involved in the transfer of the threonylcarbamoyl moiety of threonylcarbamoyl-AMP (TC-AMP) to the N6 group of A37, together with TsaE and TsaB. TsaD likely plays a direct catalytic role in this reaction. The protein is tRNA N6-adenosine threonylcarbamoyltransferase of Frankia alni (strain DSM 45986 / CECT 9034 / ACN14a).